The chain runs to 126 residues: Large ribosomal subunit protein bL19 (126 aa).

This sequence belongs to the bacterial ribosomal protein bL19 family.

This protein is located at the 30S-50S ribosomal subunit interface and may play a role in the structure and function of the aminoacyl-tRNA binding site. In Thiobacillus denitrificans (strain ATCC 25259 / T1), this protein is Large ribosomal subunit protein bL19.